Consider the following 719-residue polypeptide: Putative ankyrin repeat protein RBE_0319 (719 aa).

ANK repeat units follow at residues 377-406 (VAEELLFTATYYQNINIIKQIIETKIEISS), 408-438 (TLIKALYINFTSDNKEILDYLLSFKGLNINE), 442-472 (NGGTLLDYAITFNKLDIVKKLLSHENIEVNK), 476-506 (YGFTILEQAINDDKLEIVKLLLSCKSLEINQ), 510-540 (YQTTPLQQAINGDKLEIVKLLLSHPDIKFNE), 544-572 (LGYTSLDWVIICNKLEIFKVLMPHLDINQ), 576-605 (DGYTPLEWSIYNSYEVFQTLLLRPDINVNE), 609-639 (HGLTPLQLAIIDHNDQMIQALLSHKNIEVSE), and 642-672 (QYGTPLELVINNSNDTALKLLLSHPKINLNK).

This chain is Putative ankyrin repeat protein RBE_0319, found in Rickettsia bellii (strain RML369-C).